The sequence spans 240 residues: T4 protein (240 aa).

Belongs to the poxviruses B9 family.

This chain is T4 protein, found in Sheeppox virus (strain KS-1) (SPPV).